The sequence spans 445 residues: Arabinooligosaccharide-binding protein (445 aa).

The N-terminal stretch at 1–20 (MGKNILFFSFVGVMVLVLVA) is a signal peptide. A lipid anchor (N-palmitoyl cysteine) is attached at Cys-21. Cys-21 is lipidated: S-diacylglycerol cysteine.

Belongs to the bacterial solute-binding protein 1 family. In terms of assembly, the complex is composed of two ATP-binding proteins (MsmX), two transmembrane proteins (AraP and AraQ) and a solute-binding protein (AraN).

Its subcellular location is the cell membrane. Part of the ABC transporter complex AraNPQ involved in the uptake of arabinooligosaccharides. AraN captures the substrate and delivers it to the two transmembrane components. In Halalkalibacterium halodurans (strain ATCC BAA-125 / DSM 18197 / FERM 7344 / JCM 9153 / C-125) (Bacillus halodurans), this protein is Arabinooligosaccharide-binding protein (araN).